Here is a 568-residue protein sequence, read N- to C-terminus: WW domain-containing protein A (568 aa).

Residues 6–129 enclose the C2 domain; sequence PLNNSNGSNS…TGPISHDVVF (124 aa). The WW 1 domain maps to 325–359; it reads VKLPDGWESRIDPVSGKVFYLNHNNKTTSWISPLE. The interval 376–461 is disordered; it reads TILDNNNNNN…SRPKKTPATP (86 aa). Low complexity predominate over residues 380–418; the sequence is NNNNNNNNNNNNNNNNNNNNNNINNTNNIQQKQQAQQQP. Residues 435-451 are compositionally biased toward basic and acidic residues; it reads QKEKEKEKEINAEDYKI. One can recognise a WW 2 domain in the interval 519-552; it reads QGLPNGWEVRQDQFGRVFYVDHINRATTWTRPTV.

As to quaternary structure, interacts with calmodulin in the absence of Ca(2+).

It is found in the nucleus. The protein localises to the nucleolus. The protein resides in the cytoplasm. It localises to the cell cortex. Its subcellular location is the cytoskeleton. Functionally, involved in regulation of actin cytoskeleton organization and cytokinesis. This chain is WW domain-containing protein A, found in Dictyostelium discoideum (Social amoeba).